Consider the following 97-residue polypeptide: Protein YcgL (97 aa).

The 85-residue stretch at 1 to 85 (MLCVIYRSSK…PPEDLLKQHL (85 aa)) folds into the YcgL domain.

The sequence is that of Protein YcgL from Escherichia fergusonii (strain ATCC 35469 / DSM 13698 / CCUG 18766 / IAM 14443 / JCM 21226 / LMG 7866 / NBRC 102419 / NCTC 12128 / CDC 0568-73).